Here is a 113-residue protein sequence, read N- to C-terminus: Flagellar hook-basal body complex protein FliE (113 aa).

Belongs to the FliE family.

It is found in the bacterial flagellum basal body. The sequence is that of Flagellar hook-basal body complex protein FliE from Burkholderia mallei (strain NCTC 10247).